A 138-amino-acid polypeptide reads, in one-letter code: Large ribosomal subunit protein uL16c (138 aa).

Belongs to the universal ribosomal protein uL16 family. As to quaternary structure, part of the 50S ribosomal subunit.

Its subcellular location is the plastid. It is found in the chloroplast. This Phaeodactylum tricornutum (strain CCAP 1055/1) protein is Large ribosomal subunit protein uL16c.